Here is a 165-residue protein sequence, read N- to C-terminus: Nucleotide-binding protein P9515_05441 (165 aa).

The protein belongs to the YajQ family.

Functionally, nucleotide-binding protein. In Prochlorococcus marinus (strain MIT 9515), this protein is Nucleotide-binding protein P9515_05441.